The primary structure comprises 576 residues: Sulfite reductase [NADPH] hemoprotein beta-component (576 aa).

[4Fe-4S] cluster contacts are provided by C439, C445, C485, and C489. Residue C489 coordinates siroheme.

The protein belongs to the nitrite and sulfite reductase 4Fe-4S domain family. In terms of assembly, alpha(8)-beta(8). The alpha component is a flavoprotein, the beta component is a hemoprotein. Siroheme is required as a cofactor. The cofactor is [4Fe-4S] cluster.

It carries out the reaction hydrogen sulfide + 3 NADP(+) + 3 H2O = sulfite + 3 NADPH + 4 H(+). It functions in the pathway sulfur metabolism; hydrogen sulfide biosynthesis; hydrogen sulfide from sulfite (NADPH route): step 1/1. Its function is as follows. Component of the sulfite reductase complex that catalyzes the 6-electron reduction of sulfite to sulfide. This is one of several activities required for the biosynthesis of L-cysteine from sulfate. The sequence is that of Sulfite reductase [NADPH] hemoprotein beta-component from Aliivibrio fischeri (strain ATCC 700601 / ES114) (Vibrio fischeri).